The primary structure comprises 686 residues: L-type lectin-domain containing receptor kinase VII.1 (686 aa).

An N-terminal signal peptide occupies residues 1–20; that stretch reads MKALLFLLTLFLILPNPISA. A legume-lectin like region spans residues 21–256; that stretch reads IDFIFNGFND…SHKILAWSFS (236 aa). Residues 21-286 lie on the Extracellular side of the membrane; the sequence is IDFIFNGFND…PKDSIVKAKW (266 aa). N-linked (GlcNAc...) asparagine glycans are attached at residues asparagine 29, asparagine 34, asparagine 52, asparagine 64, asparagine 111, asparagine 123, asparagine 168, asparagine 203, asparagine 224, and asparagine 259. A helical transmembrane segment spans residues 287–307; that stretch reads FVFVLVLICFLVVALVGLVLF. Topologically, residues 308–686 are cytoplasmic; that stretch reads AVVRKRLERA…SWNSSILEGR (379 aa). The Protein kinase domain occupies 347-628; the sequence is FDEKNVIGIG…VFEGDKAEIF (282 aa). ATP is bound by residues 353–361 and lysine 376; that span reads IGIGGNGKV. The active-site Proton acceptor is aspartate 475.

It in the C-terminal section; belongs to the protein kinase superfamily. Ser/Thr protein kinase family. In the N-terminal section; belongs to the leguminous lectin family.

It localises to the cell membrane. The enzyme catalyses L-seryl-[protein] + ATP = O-phospho-L-seryl-[protein] + ADP + H(+). It carries out the reaction L-threonyl-[protein] + ATP = O-phospho-L-threonyl-[protein] + ADP + H(+). This is L-type lectin-domain containing receptor kinase VII.1 (LECRK71) from Arabidopsis thaliana (Mouse-ear cress).